Reading from the N-terminus, the 133-residue chain is ATP synthase epsilon chain (133 aa).

It belongs to the ATPase epsilon chain family. In terms of assembly, F-type ATPases have 2 components, CF(1) - the catalytic core - and CF(0) - the membrane proton channel. CF(1) has five subunits: alpha(3), beta(3), gamma(1), delta(1), epsilon(1). CF(0) has three main subunits: a, b and c.

Its subcellular location is the cell membrane. In terms of biological role, produces ATP from ADP in the presence of a proton gradient across the membrane. The protein is ATP synthase epsilon chain of Clostridium botulinum (strain ATCC 19397 / Type A).